Here is a 217-residue protein sequence, read N- to C-terminus: Heart- and neural crest derivatives-expressed protein 2 (217 aa).

The tract at residues 76 to 116 (DHSHYGGVPPGAGPPGLGGPRPVKRRGTANRKERRRTQSIN) is disordered. The span at 83 to 94 (VPPGAGPPGLGG) shows a compositional bias: gly residues. Basic residues predominate over residues 97–112 (PVKRRGTANRKERRRT). A bHLH domain is found at 99-151 (KRRGTANRKERRRTQSINSAFAELRECIPNVPADTKLSKIKTLRLATSYIAYL).

In terms of assembly, efficient DNA binding requires dimerization with another bHLH protein. Forms homodimers and heterodimers with TCF3 gene products E12 and E47, HAND1 and HEY1, HEY2 and HEYL (hairy-related transcription factors).

Its subcellular location is the nucleus. Essential for cardiac morphogenesis, particularly for the formation of the right ventricle and of the aortic arch arteries. Required for vascular development and regulation of angiogenesis, possibly through a VEGF signaling pathway. Also plays an important role in limb development, particularly in the establishment of anterior-posterior polarization, acting as an upstream regulator of sonic hedgehog (SHH) induction in the limb bud. Is involved in the development of branchial arches, which give rise to unique structures in the head and neck. Binds DNA on E-box consensus sequence 5'-CANNTG-3'. This chain is Heart- and neural crest derivatives-expressed protein 2 (Hand2), found in Rattus norvegicus (Rat).